We begin with the raw amino-acid sequence, 952 residues long: MTKQTMNYAEPWSQFYGPNLGYVMEMYEQYLEDPDSVDPELKQLFKEWGAPTTEAERFDHSESAAKTYQTFRLPENPTIFSKLVAAVKLADKIRHYGHLAADINPLNTQNKDTRRIELSEFDLTEDDLKQIPVAFICPHAPAHVKNGLDAINHLRKIYTDKIAFEFSQVHNLEERNWLISQIESGAYYPSLTNEEKVALLRRLTEVEGFEKFLHRTFVGQKRFSIEGLDSMVPLLDELIRHSIEEEVKAVNIGMAHRGRLNVLAHVLGKPYEMIFAEFQHAESKDFMPSEGSVAITYGWTGDVKYHLGAARRLRNKNEHTMRITLANNPSHLEVVNPVVLGFTRAAQEDRSNAGVPSQDTDSAFAIMIHGDAAFPGQGIVAETLNLSRLQGYQTGGSIHIIANNMIGFTTESYDSRSTKYASDIAKGFEIPIVHVNADDPEACLAAANLAFAYRKRFKKDFVIDLIGYRRFGHNEMDEPMATNPTMYSIIQQHPTVRQLYAQKLIEKGIITKEAVEEMEREVAERLKIAYEKVPKDESKLDFIMDPPKPVASKLPFVKTSVEKDVLRRLNKELLQFPSDFHVFNKLERILKRREGVFDGKGKIDWAHAEILAFATILRDGVPIRLTGQDSQRGTFAQRHLVLHDMKTGEEFVPLHHISDANASFVVYNSPLTEAAVLGYEYGYNVFAPETLVLWEAQFGDFANMAQVMFDQFISSGRAKWGQKSGLVMLLPHGYEGQGPEHSSGRLERFLQLAAENNWTVANLSTAAQYFHILRRQAGILQREEVRPLVLMTPKSLLRHPLAASDVEEFTNGQFHPVIEQKGLGENREKVERIILCTGKFAIDLAEQINKMEGLDWLHIVRVEELYPFPKEELQAIFARYPNVKEIIWAQEEPKNMGSWCYVEPKLREIAPDEVDVSYIGRRRRASPAEGDPVVHRKEQERIIQCALTKKEQ.

It belongs to the alpha-ketoglutarate dehydrogenase family. In terms of assembly, homodimer. Part of the 2-oxoglutarate dehydrogenase (OGDH) complex composed of E1 (2-oxoglutarate dehydrogenase), E2 (dihydrolipoamide succinyltransferase) and E3 (dihydrolipoamide dehydrogenase); the complex contains multiple copies of the three enzymatic components (E1, E2 and E3). It depends on thiamine diphosphate as a cofactor.

It catalyses the reaction N(6)-[(R)-lipoyl]-L-lysyl-[protein] + 2-oxoglutarate + H(+) = N(6)-[(R)-S(8)-succinyldihydrolipoyl]-L-lysyl-[protein] + CO2. Functionally, E1 component of the 2-oxoglutarate dehydrogenase (OGDH) complex which catalyzes the decarboxylation of 2-oxoglutarate, the first step in the conversion of 2-oxoglutarate to succinyl-CoA and CO(2). The chain is 2-oxoglutarate dehydrogenase E1 component from Geobacillus sp. (strain WCH70).